A 271-amino-acid polypeptide reads, in one-letter code: Imidazole glycerol phosphate synthase subunit HisF (271 aa).

Catalysis depends on residues Asp12 and Asp136.

Belongs to the HisA/HisF family. Heterodimer of HisH and HisF.

The protein localises to the cytoplasm. The catalysed reaction is 5-[(5-phospho-1-deoxy-D-ribulos-1-ylimino)methylamino]-1-(5-phospho-beta-D-ribosyl)imidazole-4-carboxamide + L-glutamine = D-erythro-1-(imidazol-4-yl)glycerol 3-phosphate + 5-amino-1-(5-phospho-beta-D-ribosyl)imidazole-4-carboxamide + L-glutamate + H(+). Its pathway is amino-acid biosynthesis; L-histidine biosynthesis; L-histidine from 5-phospho-alpha-D-ribose 1-diphosphate: step 5/9. In terms of biological role, IGPS catalyzes the conversion of PRFAR and glutamine to IGP, AICAR and glutamate. The HisF subunit catalyzes the cyclization activity that produces IGP and AICAR from PRFAR using the ammonia provided by the HisH subunit. The protein is Imidazole glycerol phosphate synthase subunit HisF of Natronomonas pharaonis (strain ATCC 35678 / DSM 2160 / CIP 103997 / JCM 8858 / NBRC 14720 / NCIMB 2260 / Gabara) (Halobacterium pharaonis).